An 82-amino-acid polypeptide reads, in one-letter code: MKTYAVLLALVVAFVCIAESTGYPVEDLEDDELTELEAEALLEDLLEDLELEDLDYNEEARSWASMAKKLKEYMEKLKQRAG.

Positions 1-22 (MKTYAVLLALVVAFVCIAESTG) are cleaved as a signal peptide. Positions 23 to 61 (YPVEDLEDDELTELEAEALLEDLLEDLELEDLDYNEEAR) are excised as a propeptide. Positions 58–61 (EEAR) match the Processing quadruplet motif motif. Ala-81 is modified (alanine amide).

Cleavage of the propeptide depends on the processing quadruplet motif (XXXR, with at least one of X being E). Expressed by the venom gland.

Its subcellular location is the secreted. Functionally, it has antimicrobial activity against Gram-positive bacteria (A.globiformis VKM Ac-1112 (MIC=0.7 uM), and B.subtilis VKM B-501 (MIC=2.9 uM)), Gram-negative bacteria (E.coli DH5-alpha (MIC=23 uM), E.coli MH1 (MIC=28 uM), and P.aeruginosa PAO1 (MIC&gt;45 uM)), and yeasts (P.pastoris GS115 (MIC=23 uM), and S.cerevisiae Y190 (MIC=23 uM)). Does not have hemolytic against rabbit erythrocytes. Causes paralysis, but is not lethal when injected into insect (M.domestica) larvae. The polypeptide is M-zodatoxin-Lt3b (Lachesana tarabaevi (Spider)).